Reading from the N-terminus, the 205-residue chain is Holliday junction branch migration complex subunit RuvA (205 aa).

The interval 1 to 64 (MIGRLRGTLA…EDAHLLYGFH (64 aa)) is domain I. Residues 65 to 143 (EKRERELFRE…AWETSPAMFT (79 aa)) form a domain II region. The tract at residues 144-153 (LVSDGPVPVS) is flexible linker. The interval 154–205 (GASTAEADAVSALVSLGYKPQEASKAVSAIKDKAGLSSEELIRRSLKGMITK) is domain III.

It belongs to the RuvA family. As to quaternary structure, homotetramer. Forms an RuvA(8)-RuvB(12)-Holliday junction (HJ) complex. HJ DNA is sandwiched between 2 RuvA tetramers; dsDNA enters through RuvA and exits via RuvB. An RuvB hexamer assembles on each DNA strand where it exits the tetramer. Each RuvB hexamer is contacted by two RuvA subunits (via domain III) on 2 adjacent RuvB subunits; this complex drives branch migration. In the full resolvosome a probable DNA-RuvA(4)-RuvB(12)-RuvC(2) complex forms which resolves the HJ.

Its subcellular location is the cytoplasm. The RuvA-RuvB-RuvC complex processes Holliday junction (HJ) DNA during genetic recombination and DNA repair, while the RuvA-RuvB complex plays an important role in the rescue of blocked DNA replication forks via replication fork reversal (RFR). RuvA specifically binds to HJ cruciform DNA, conferring on it an open structure. The RuvB hexamer acts as an ATP-dependent pump, pulling dsDNA into and through the RuvAB complex. HJ branch migration allows RuvC to scan DNA until it finds its consensus sequence, where it cleaves and resolves the cruciform DNA. This Pseudomonas putida (strain W619) protein is Holliday junction branch migration complex subunit RuvA.